Reading from the N-terminus, the 288-residue chain is Serpentine receptor class gamma-1 (288 aa).

The next 7 helical transmembrane spans lie at 25–45, 59–79, 118–138, 148–168, 197–217, 238–258, and 268–288; these read LFLQLCYLTPSALFLSRVIYI, FYTIFLADCVTGFILVNFSIF, FQILVQILFVANRASCVLWPL, LKSILTTMAISPCLWIWTIAI, FSILRLTSVITIVVATTTMLI, VYLSVCYLLPAIAEFEYFLVL, and ILHGLVVICWDIQNICSTYVM.

It belongs to the nematode receptor-like protein srg family.

It localises to the membrane. The protein is Serpentine receptor class gamma-1 (srg-1) of Caenorhabditis elegans.